The sequence spans 423 residues: Glutamyl-tRNA reductase (423 aa).

Substrate contacts are provided by residues 49–52, serine 107, 112–114, and glutamine 118; these read TCNR and EPQ. Residue cysteine 50 is the Nucleophile of the active site. 187 to 192 provides a ligand contact to NADP(+); that stretch reads GAGETI.

Belongs to the glutamyl-tRNA reductase family. In terms of assembly, homodimer.

The enzyme catalyses (S)-4-amino-5-oxopentanoate + tRNA(Glu) + NADP(+) = L-glutamyl-tRNA(Glu) + NADPH + H(+). Its pathway is porphyrin-containing compound metabolism; protoporphyrin-IX biosynthesis; 5-aminolevulinate from L-glutamyl-tRNA(Glu): step 1/2. Functionally, catalyzes the NADPH-dependent reduction of glutamyl-tRNA(Glu) to glutamate 1-semialdehyde (GSA). This chain is Glutamyl-tRNA reductase, found in Pseudoalteromonas atlantica (strain T6c / ATCC BAA-1087).